Here is a 113-residue protein sequence, read N- to C-terminus: MNTVRVTFLLVFVLAVSLGQADKDENRMVMQEKTEQGKSYLDFAENLLLQKLEELEAKLLEEDSEESRNSRQKRCIGEGVPCDENDPRCCSGLVCLKPTLHGIWYKSYYCYKK.

The first 21 residues, 1–21 (MNTVRVTFLLVFVLAVSLGQA), serve as a signal peptide directing secretion. The propeptide occupies 22-74 (DKDENRMVMQEKTEQGKSYLDFAENLLLQKLEELEAKLLEEDSEESRNSRQKR). 3 disulfide bridges follow: C75–C90, C82–C95, and C89–C110.

This sequence belongs to the neurotoxin 14 (magi-1) family. 01 (HNTX-16) subfamily. As to expression, expressed by the venom gland.

It is found in the secreted. Probable ion channel inhibitor. This Cyriopagopus hainanus (Chinese bird spider) protein is U11-theraphotoxin-Hhn1a.